Consider the following 267-residue polypeptide: Phosphate import ATP-binding protein PstB (267 aa).

An ABC transporter domain is found at 21–262; sequence VAARNLDFYY…PSKQQTEDYI (242 aa). 53–60 lines the ATP pocket; sequence GPSGCGKS.

This sequence belongs to the ABC transporter superfamily. Phosphate importer (TC 3.A.1.7) family. As to quaternary structure, the complex is composed of two ATP-binding proteins (PstB), two transmembrane proteins (PstC and PstA) and a solute-binding protein (PstS).

The protein resides in the cell inner membrane. The enzyme catalyses phosphate(out) + ATP + H2O = ADP + 2 phosphate(in) + H(+). In terms of biological role, part of the ABC transporter complex PstSACB involved in phosphate import. Responsible for energy coupling to the transport system. The polypeptide is Phosphate import ATP-binding protein PstB (Xanthomonas euvesicatoria pv. vesicatoria (strain 85-10) (Xanthomonas campestris pv. vesicatoria)).